The sequence spans 354 residues: Holliday junction branch migration complex subunit RuvB (354 aa).

The interval 1 to 24 (MSIQTDDFAPVPPPKRVVSAAPTS) is disordered. Residues 5–195 (TDDFAPVPPP…FGIVARLEFY (191 aa)) are large ATPase domain (RuvB-L). Residues Leu-34, Arg-35, Gly-76, Lys-79, Thr-80, Thr-81, 142 to 144 (EDY), Arg-185, Tyr-195, and Arg-232 each bind ATP. Thr-80 is a Mg(2+) binding site. The small ATPAse domain (RuvB-S) stretch occupies residues 196–266 (TPEELSRIVT…IAQRALAMLD (71 aa)). Residues 269 to 354 (PQGFDVMDRK…RQHTDLFGPA (86 aa)) form a head domain (RuvB-H) region. Positions 324 and 329 each coordinate DNA.

This sequence belongs to the RuvB family. Homohexamer. Forms an RuvA(8)-RuvB(12)-Holliday junction (HJ) complex. HJ DNA is sandwiched between 2 RuvA tetramers; dsDNA enters through RuvA and exits via RuvB. An RuvB hexamer assembles on each DNA strand where it exits the tetramer. Each RuvB hexamer is contacted by two RuvA subunits (via domain III) on 2 adjacent RuvB subunits; this complex drives branch migration. In the full resolvosome a probable DNA-RuvA(4)-RuvB(12)-RuvC(2) complex forms which resolves the HJ.

The protein resides in the cytoplasm. The enzyme catalyses ATP + H2O = ADP + phosphate + H(+). Functionally, the RuvA-RuvB-RuvC complex processes Holliday junction (HJ) DNA during genetic recombination and DNA repair, while the RuvA-RuvB complex plays an important role in the rescue of blocked DNA replication forks via replication fork reversal (RFR). RuvA specifically binds to HJ cruciform DNA, conferring on it an open structure. The RuvB hexamer acts as an ATP-dependent pump, pulling dsDNA into and through the RuvAB complex. RuvB forms 2 homohexamers on either side of HJ DNA bound by 1 or 2 RuvA tetramers; 4 subunits per hexamer contact DNA at a time. Coordinated motions by a converter formed by DNA-disengaged RuvB subunits stimulates ATP hydrolysis and nucleotide exchange. Immobilization of the converter enables RuvB to convert the ATP-contained energy into a lever motion, pulling 2 nucleotides of DNA out of the RuvA tetramer per ATP hydrolyzed, thus driving DNA branch migration. The RuvB motors rotate together with the DNA substrate, which together with the progressing nucleotide cycle form the mechanistic basis for DNA recombination by continuous HJ branch migration. Branch migration allows RuvC to scan DNA until it finds its consensus sequence, where it cleaves and resolves cruciform DNA. In Paracidovorax citrulli (strain AAC00-1) (Acidovorax citrulli), this protein is Holliday junction branch migration complex subunit RuvB.